A 2395-amino-acid polypeptide reads, in one-letter code: Centrosomal protein of 295 kDa (2395 aa).

Residues 1–540 (MKRKVMNGKL…KQADHLEVRP (540 aa)) form a necessary for centriole targeting and microtubule association region. Ser13 bears the Phosphoserine mark. Coiled coils occupy residues 53-84 (QRRNQQVSHLAEELRAEWEEAQSQKIQNLEKL), 114-148 (AERKTKAEARHKEALKAQKKQKEMLMKQKTRHIKA), 209-277 (DAHL…KRQT), 488-538 (ARHK…HLEV), and 567-592 (QQNRLHKQTVETARKRLLEYQTVLKE). Disordered stretches follow at residues 602–643 (LIPD…PVQP), 660–681 (GHIPQRQGETARAKQSVESQER), and 735–764 (SDSQQISSEDSENISSKPTEPSSSLPLMPE). Ser634 bears the Phosphoserine mark. A compositionally biased stretch (low complexity) spans 735 to 750 (SDSQQISSEDSENISS). The stretch at 817-848 (GQLELQKKVLQERQEAQEKLLSCTQKELEEQT) forms a coiled coil. Disordered stretches follow at residues 864-893 (SLPSASAESGNIQTSSTKSDATVSSDSMDN), 966-986 (ADTQSRKIQKPPLPTNKKGLL), and 1212-1272 (VDPE…SKVT). The span at 1219–1250 (FQFSPQTQENRSSQQTGFSSFTPSLRQPSCVS) shows a compositional bias: polar residues. The stretch at 1444-1488 (HDDLQALQQQLDVHREAIRSCQDIQEELLLQRLNKLEQRVSSKQI) forms a coiled coil. Phosphoserine is present on Ser1565. Residues 1677 to 1692 (PWGDSSQGSSSGDQPG) are compositionally biased toward low complexity. Disordered stretches follow at residues 1677–1715 (PWGDSSQGSSSGDQPGAAAVHAEHSGESLGKELSGRASK), 1819–1845 (SEEEEEEEACTNLSPLMKPDDEVETQE), 1875–1899 (ESFSEQTEHQEQESSSKEEETGSLS), 1989–2013 (DLSSPGTSQEDRDFYQQNSESSSEK), and 2354–2395 (NKTP…SQCI). The segment covering 1697-1710 (HAEHSGESLGKELS) has biased composition (basic and acidic residues). Positions 1880–1894 (QTEHQEQESSSKEEE) are enriched in basic and acidic residues. Residues 2329 to 2395 (SLGEAFMKRK…TAKRNRSQCI (67 aa)) are ALMS motif. Positions 2376–2388 (HLKEAVSGDETAK) are enriched in basic and acidic residues.

As to quaternary structure, interacts (via ALMS motif) with microtubules; this interaction is direct.

It is found in the cytoplasm. It localises to the cytoskeleton. The protein resides in the microtubule organizing center. Its subcellular location is the centrosome. The protein localises to the centriole. It is found in the spindle. Centriole-enriched microtubule-binding protein involved in centriole biogenesis. Essential for the generation of the distal portion of new-born centrioles in a CPAP- and CEP120-mediated elongation dependent manner during the cell cycle S/G2 phase after formation of the initiating cartwheel structure. Required for the recruitment of centriolar proteins, such as POC1B, POC5 and CEP135, into the distal portion of centrioles. Also required for centriole-to-centrosome conversion during mitotic progression, but is dispensable for cartwheel removal or centriole disengagement. Binds to and stabilizes centriolar microtubule. May be involved in ciliogenesis. This is Centrosomal protein of 295 kDa from Rattus norvegicus (Rat).